The sequence spans 342 residues: Isopentenyl-diphosphate delta-isomerase (342 aa).

11 to 12 contributes to the substrate binding site; it reads RK. FMN is bound by residues Ser-68, 69-71, Ser-99, and Asn-128; that span reads SMT. 99–101 is a binding site for substrate; sequence SQR. Gln-162 contacts substrate. Position 163 (Glu-163) interacts with Mg(2+). FMN contacts are provided by residues Lys-194, Ser-219, Thr-224, 275–277, and 296–297; these read GVR and AK.

This sequence belongs to the IPP isomerase type 2 family. In terms of assembly, homooctamer. Dimer of tetramers. It depends on FMN as a cofactor. The cofactor is NADPH. Mg(2+) is required as a cofactor.

The protein resides in the cytoplasm. It catalyses the reaction isopentenyl diphosphate = dimethylallyl diphosphate. In terms of biological role, involved in the biosynthesis of isoprenoids. Catalyzes the 1,3-allylic rearrangement of the homoallylic substrate isopentenyl (IPP) to its allylic isomer, dimethylallyl diphosphate (DMAPP). This is Isopentenyl-diphosphate delta-isomerase from Legionella pneumophila (strain Corby).